A 769-amino-acid polypeptide reads, in one-letter code: Intron Large complex component GCFC2 (769 aa).

Disordered regions lie at residues 1–122 (MALR…PIVE) and 134–212 (RKRE…DENQ). Phosphoserine is present on residues serine 16, serine 17, serine 19, and serine 85. Residue threonine 86 is modified to Phosphothreonine. Serine 118 and serine 169 each carry phosphoserine. The span at 190–201 (RMAEETSIRSEE) shows a compositional bias: basic and acidic residues. Residues 202 to 212 (SSEESQEDENQ) show a composition bias toward acidic residues. Phosphoserine is present on residues serine 203 and serine 206. Residues 256 to 308 (NLEIIKKQLNNRLTLLQESHRSHQREYEKYEQDIKSSKTAIQNLESASDHAQN) are a coiled coil.

It belongs to the GCF family. As to quaternary structure, found in the Intron Large (IL) complex, a post-mRNA release spliceosomal complex containing the excised intron, U2, U5 and U6 snRNPs, and splicing factors. Interacts with TFIP11 and DHX15.

The protein resides in the nucleus. Its subcellular location is the nucleoplasm. It is found in the nucleolus. In terms of biological role, involved in pre-mRNA splicing through regulating spliceosome C complex formation. May play a role during late-stage splicing events and turnover of excised introns. In Mus musculus (Mouse), this protein is Intron Large complex component GCFC2 (Gcfc2).